The primary structure comprises 407 residues: Na(+)-translocating NADH-quinone reductase subunit F (407 aa).

Residues 3-23 form a helical membrane-spanning segment; the sequence is IILGVVMFTLIVLALTVMILF. Residues 32–126 enclose the 2Fe-2S ferredoxin-type domain; sequence GDITIDINED…NLKIELPEEI (95 aa). [2Fe-2S] cluster is bound by residues Cys-69, Cys-75, Cys-78, and Cys-110. In terms of domain architecture, FAD-binding FR-type spans 129–269; that stretch reads VKKWECEVIS…SGPFGEFFAK (141 aa).

This sequence belongs to the NqrF family. As to quaternary structure, composed of six subunits; NqrA, NqrB, NqrC, NqrD, NqrE and NqrF. It depends on [2Fe-2S] cluster as a cofactor. The cofactor is FAD.

Its subcellular location is the cell inner membrane. It carries out the reaction a ubiquinone + n Na(+)(in) + NADH + H(+) = a ubiquinol + n Na(+)(out) + NAD(+). Functionally, NQR complex catalyzes the reduction of ubiquinone-1 to ubiquinol by two successive reactions, coupled with the transport of Na(+) ions from the cytoplasm to the periplasm. The first step is catalyzed by NqrF, which accepts electrons from NADH and reduces ubiquinone-1 to ubisemiquinone by a one-electron transfer pathway. The sequence is that of Na(+)-translocating NADH-quinone reductase subunit F from Yersinia enterocolitica serotype O:8 / biotype 1B (strain NCTC 13174 / 8081).